Reading from the N-terminus, the 496-residue chain is Glycerol kinase (496 aa).

Residue Thr12 participates in ADP binding. Residues Thr12, Thr13, and Ser14 each coordinate ATP. Position 12 (Thr12) interacts with sn-glycerol 3-phosphate. Arg16 is a binding site for ADP. Sn-glycerol 3-phosphate is bound by residues Arg82, Glu83, and Tyr134. Residues Arg82, Glu83, and Tyr134 each coordinate glycerol. His230 carries the post-translational modification Phosphohistidine; by HPr. Position 244 (Asp244) interacts with sn-glycerol 3-phosphate. Residues Asp244 and Gln245 each coordinate glycerol. ADP is bound by residues Thr266 and Gly309. ATP contacts are provided by Thr266, Gly309, Gln313, and Gly410. 2 residues coordinate ADP: Gly410 and Asn414.

Belongs to the FGGY kinase family. In terms of assembly, homotetramer and homodimer (in equilibrium). Post-translationally, the phosphoenolpyruvate-dependent sugar phosphotransferase system (PTS), including enzyme I, and histidine-containing protein (HPr) are required for the phosphorylation, which leads to the activation of the enzyme.

The catalysed reaction is glycerol + ATP = sn-glycerol 3-phosphate + ADP + H(+). Its pathway is polyol metabolism; glycerol degradation via glycerol kinase pathway; sn-glycerol 3-phosphate from glycerol: step 1/1. Its activity is regulated as follows. Activated by phosphorylation and inhibited by fructose 1,6-bisphosphate (FBP). Functionally, key enzyme in the regulation of glycerol uptake and metabolism. Catalyzes the phosphorylation of glycerol to yield sn-glycerol 3-phosphate. The sequence is that of Glycerol kinase from Bacillus cytotoxicus (strain DSM 22905 / CIP 110041 / 391-98 / NVH 391-98).